The following is a 238-amino-acid chain: Large ribosomal subunit protein uL2 (238 aa).

The interval 198 to 238 is disordered; it reads HPHGGGLHQSVSRPSTVSRNAPPGRKVGHIASRRTGRRGGA. A compositionally biased stretch (polar residues) spans 206-216; that stretch reads QSVSRPSTVSR. The span at 223-238 shows a compositional bias: basic residues; that stretch reads KVGHIASRRTGRRGGA.

It belongs to the universal ribosomal protein uL2 family. In terms of assembly, part of the 50S ribosomal subunit. Forms a bridge to the 30S subunit in the 70S ribosome.

Functionally, one of the primary rRNA binding proteins. Required for association of the 30S and 50S subunits to form the 70S ribosome, for tRNA binding and peptide bond formation. It has been suggested to have peptidyltransferase activity; this is somewhat controversial. Makes several contacts with the 16S rRNA in the 70S ribosome. This is Large ribosomal subunit protein uL2 from Sulfolobus acidocaldarius (strain ATCC 33909 / DSM 639 / JCM 8929 / NBRC 15157 / NCIMB 11770).